Reading from the N-terminus, the 673-residue chain is UvrABC system protein B (673 aa).

Residues 26-183 enclose the Helicase ATP-binding domain; sequence EGLEDGLAHQ…RRLAELQYTR (158 aa). Residue 39–46 coordinates ATP; that stretch reads GVTGSGKT. The short motif at 92–115 is the Beta-hairpin element; sequence YYDYYQPEAYVPSSDTFIEKDASV. Residues 431–597 enclose the Helicase C-terminal domain; it reads QVDDLLSEIR…GLNKKVVDIL (167 aa). The region spanning 633 to 668 is the UVR domain; the sequence is QQKIHELEGQMMQHAQNLEFEEAAQIRDQLHQLREL.

The protein belongs to the UvrB family. Forms a heterotetramer with UvrA during the search for lesions. Interacts with UvrC in an incision complex.

Its subcellular location is the cytoplasm. The UvrABC repair system catalyzes the recognition and processing of DNA lesions. A damage recognition complex composed of 2 UvrA and 2 UvrB subunits scans DNA for abnormalities. Upon binding of the UvrA(2)B(2) complex to a putative damaged site, the DNA wraps around one UvrB monomer. DNA wrap is dependent on ATP binding by UvrB and probably causes local melting of the DNA helix, facilitating insertion of UvrB beta-hairpin between the DNA strands. Then UvrB probes one DNA strand for the presence of a lesion. If a lesion is found the UvrA subunits dissociate and the UvrB-DNA preincision complex is formed. This complex is subsequently bound by UvrC and the second UvrB is released. If no lesion is found, the DNA wraps around the other UvrB subunit that will check the other stand for damage. The protein is UvrABC system protein B of Salmonella heidelberg (strain SL476).